The sequence spans 447 residues: Argininosuccinate synthase (447 aa).

Residues 17 to 25 (AFSGGLDTS) and Ala-43 contribute to the ATP site. Residue Tyr-99 coordinates L-citrulline. ATP contacts are provided by Gly-129 and Thr-131. L-aspartate-binding residues include Thr-131, Asn-135, and Asp-136. Asn-135 contacts L-citrulline. Asp-136 contacts ATP. 2 residues coordinate L-citrulline: Arg-139 and Ser-192. Residue Asp-194 participates in ATP binding. The L-citrulline site is built by Thr-201, Glu-203, and Glu-280.

This sequence belongs to the argininosuccinate synthase family. Type 2 subfamily. In terms of assembly, homotetramer.

It localises to the cytoplasm. It carries out the reaction L-citrulline + L-aspartate + ATP = 2-(N(omega)-L-arginino)succinate + AMP + diphosphate + H(+). It functions in the pathway amino-acid biosynthesis; L-arginine biosynthesis; L-arginine from L-ornithine and carbamoyl phosphate: step 2/3. The chain is Argininosuccinate synthase from Janthinobacterium sp. (strain Marseille) (Minibacterium massiliensis).